Reading from the N-terminus, the 422-residue chain is Ribosomal RNA small subunit methyltransferase B (422 aa).

Residues 254–260, D277, D303, and D322 contribute to the S-adenosyl-L-methionine site; that span reads CAAPGGK. Catalysis depends on C375, which acts as the Nucleophile.

This sequence belongs to the class I-like SAM-binding methyltransferase superfamily. RsmB/NOP family.

The protein resides in the cytoplasm. It carries out the reaction cytidine(967) in 16S rRNA + S-adenosyl-L-methionine = 5-methylcytidine(967) in 16S rRNA + S-adenosyl-L-homocysteine + H(+). In terms of biological role, specifically methylates the cytosine at position 967 (m5C967) of 16S rRNA. The protein is Ribosomal RNA small subunit methyltransferase B of Proteus mirabilis (strain HI4320).